The sequence spans 372 residues: Histidinol-phosphate aminotransferase (372 aa).

Lys230 is modified (N6-(pyridoxal phosphate)lysine).

It belongs to the class-II pyridoxal-phosphate-dependent aminotransferase family. Histidinol-phosphate aminotransferase subfamily. Homodimer. Pyridoxal 5'-phosphate is required as a cofactor.

It carries out the reaction L-histidinol phosphate + 2-oxoglutarate = 3-(imidazol-4-yl)-2-oxopropyl phosphate + L-glutamate. It functions in the pathway amino-acid biosynthesis; L-histidine biosynthesis; L-histidine from 5-phospho-alpha-D-ribose 1-diphosphate: step 7/9. In Paenarthrobacter aurescens (strain TC1), this protein is Histidinol-phosphate aminotransferase.